A 270-amino-acid chain; its full sequence is Transcriptional regulator BrlR (270 aa).

M1 is a 3',3'-c-di-GMP binding site. Positions 1-71 constitute an HTH merR-type domain; that stretch reads MLTIGQLARI…LEAIDRLKRD (71 aa). The segment at residues 4–23 is a DNA-binding region (H-T-H motif); the sequence is IGQLARIFEISTKTLRHYDA. The 3',3'-c-di-GMP site is built by R31, S34, D35, Y40, R67, R70, R86, and Y270. The segment at 120–270 is involved in effector-binding, probably including pyocyanine-binding; sequence MHARIVERPA…SQVDLYIPIY (151 aa).

Monomer. Homodimer; dimer formation enhanced in the presence of the second messenger, cyclic di-GMP (c-di-GMP). Homotetramer; dimer of dimers, arranged in a head-to-tail fashion, which may reduce DNA-binding ability. Conformational changes upon binding c-di-GMP or pyocyanine may facilitate DNA binding.

Its function is as follows. Transcriptional regulator. Responsive to the second messenger cyclic di-GMP (c-di-GMP) and to the virulence factor pyocyanine, which both enhance gene expression and promoter DNA binding of BrlR. Activates expression of operons encoding the multidrug efflux pumps MexAB-OprM and MexEF-OprN and several ABC transport systems, acting by direct binding to their respective promoters. Also acts as a repressor of the two component regulatory system, PhoPQ. Binds to promoter of its own gene. Contributes to the antimicrobial tolerance exhibited by biofilms, acting, at least in part, by activating expression of multidrug efflux pumps and ABC transporters. This Pseudomonas aeruginosa (strain ATCC 15692 / DSM 22644 / CIP 104116 / JCM 14847 / LMG 12228 / 1C / PRS 101 / PAO1) protein is Transcriptional regulator BrlR.